Reading from the N-terminus, the 316-residue chain is 4-hydroxy-3-methylbut-2-enyl diphosphate reductase (316 aa).

Cys-12 provides a ligand contact to [4Fe-4S] cluster. Residues His-41 and His-74 each coordinate (2E)-4-hydroxy-3-methylbut-2-enyl diphosphate. 2 residues coordinate dimethylallyl diphosphate: His-41 and His-74. Positions 41 and 74 each coordinate isopentenyl diphosphate. Cys-96 contacts [4Fe-4S] cluster. His-124 serves as a coordination point for (2E)-4-hydroxy-3-methylbut-2-enyl diphosphate. His-124 provides a ligand contact to dimethylallyl diphosphate. An isopentenyl diphosphate-binding site is contributed by His-124. Residue Glu-126 is the Proton donor of the active site. Thr-167 contributes to the (2E)-4-hydroxy-3-methylbut-2-enyl diphosphate binding site. Cys-197 contacts [4Fe-4S] cluster. Residues Ser-225, Ser-226, Asn-227, and Ser-269 each contribute to the (2E)-4-hydroxy-3-methylbut-2-enyl diphosphate site. The dimethylallyl diphosphate site is built by Ser-225, Ser-226, Asn-227, and Ser-269. 4 residues coordinate isopentenyl diphosphate: Ser-225, Ser-226, Asn-227, and Ser-269.

This sequence belongs to the IspH family. In terms of assembly, homodimer. Requires [4Fe-4S] cluster as cofactor.

The catalysed reaction is isopentenyl diphosphate + 2 oxidized [2Fe-2S]-[ferredoxin] + H2O = (2E)-4-hydroxy-3-methylbut-2-enyl diphosphate + 2 reduced [2Fe-2S]-[ferredoxin] + 2 H(+). The enzyme catalyses dimethylallyl diphosphate + 2 oxidized [2Fe-2S]-[ferredoxin] + H2O = (2E)-4-hydroxy-3-methylbut-2-enyl diphosphate + 2 reduced [2Fe-2S]-[ferredoxin] + 2 H(+). It participates in isoprenoid biosynthesis; dimethylallyl diphosphate biosynthesis; dimethylallyl diphosphate from (2E)-4-hydroxy-3-methylbutenyl diphosphate: step 1/1. It functions in the pathway isoprenoid biosynthesis; isopentenyl diphosphate biosynthesis via DXP pathway; isopentenyl diphosphate from 1-deoxy-D-xylulose 5-phosphate: step 6/6. Functionally, catalyzes the conversion of 1-hydroxy-2-methyl-2-(E)-butenyl 4-diphosphate (HMBPP) into a mixture of isopentenyl diphosphate (IPP) and dimethylallyl diphosphate (DMAPP). Acts in the terminal step of the DOXP/MEP pathway for isoprenoid precursor biosynthesis. This Salmonella paratyphi A (strain ATCC 9150 / SARB42) protein is 4-hydroxy-3-methylbut-2-enyl diphosphate reductase.